The following is a 564-amino-acid chain: Pyruvate decarboxylase (564 aa).

Residues Asp-28 and His-115 each coordinate pyruvate. Residues Thr-390 and 413–415 contribute to the thiamine diphosphate site; that span reads GSI. Asp-444 serves as a coordination point for Mg(2+). Thiamine diphosphate-binding positions include 445-446 and 471-476; these read GS and NNGYTI. Mg(2+) contacts are provided by Asn-471 and Gly-473. Glu-477 is a pyruvate binding site.

Belongs to the TPP enzyme family. As to quaternary structure, homotetramer. Mg(2+) serves as cofactor. It depends on thiamine diphosphate as a cofactor.

The catalysed reaction is a 2-oxocarboxylate + H(+) = an aldehyde + CO2. It carries out the reaction pyruvate + H(+) = acetaldehyde + CO2. The chain is Pyruvate decarboxylase (PDC) from Hanseniaspora uvarum (Yeast).